Consider the following 254-residue polypeptide: Ribosomal RNA small subunit methyltransferase G (254 aa).

Positions 1 to 21 (MPEGDGVPRETPSPSVVPESP) are disordered. The segment covering 9–21 (RETPSPSVVPESP) has biased composition (low complexity). S-adenosyl-L-methionine contacts are provided by residues G90, L95, 142–143 (AE), and R157. The interval 230–254 (GPLRAATAPAPPGAAKRRPGKGNRR) is disordered. Basic residues predominate over residues 244–254 (AKRRPGKGNRR).

Belongs to the methyltransferase superfamily. RNA methyltransferase RsmG family.

It is found in the cytoplasm. Functionally, specifically methylates the N7 position of guanine in position 518 of 16S rRNA. The protein is Ribosomal RNA small subunit methyltransferase G of Kineococcus radiotolerans (strain ATCC BAA-149 / DSM 14245 / SRS30216).